A 1103-amino-acid polypeptide reads, in one-letter code: Centrosomal protein of 126 kDa (1103 aa).

Over residues 1–12 (MLAGRPGAQSAG) the composition is skewed to low complexity. The tract at residues 1–36 (MLAGRPGAQSAGAGVGAGPPDAPGARDGGGRPRPGA) is disordered. 2 coiled-coil regions span residues 43-116 (HLEK…FQRA) and 182-222 (QKHL…KLLE). 2 disordered regions span residues 380-409 (NTAE…ESPT) and 723-812 (ESKA…PGQS). Basic and acidic residues predominate over residues 723–735 (ESKAPVHASDSKT). The span at 736–748 (QKTKPQRGVKFTR) shows a compositional bias: basic residues. Composition is skewed to polar residues over residues 763–784 (RKPT…QTQG) and 798–812 (NIKS…PGQS).

As to quaternary structure, interacts with DCTN1.

Its subcellular location is the midbody. The protein resides in the cytoplasm. It is found in the cytoskeleton. The protein localises to the microtubule organizing center. It localises to the centrosome. Its subcellular location is the cilium basal body. Its function is as follows. Participate in cytokinesis. Necessary for microtubules and mitotic spindle organization. Involved in primary cilium formation. This is Centrosomal protein of 126 kDa from Mus musculus (Mouse).